Here is a 229-residue protein sequence, read N- to C-terminus: Orotidine 5'-phosphate decarboxylase (229 aa).

Substrate is bound by residues Asp-12, Lys-34, 61 to 70 (DWKLHDIGAT), Thr-116, Arg-177, Gln-186, Gly-206, and Arg-207. Catalysis depends on Lys-63, which acts as the Proton donor.

It belongs to the OMP decarboxylase family. Type 1 subfamily. As to quaternary structure, homodimer.

It carries out the reaction orotidine 5'-phosphate + H(+) = UMP + CO2. It functions in the pathway pyrimidine metabolism; UMP biosynthesis via de novo pathway; UMP from orotate: step 2/2. Functionally, catalyzes the decarboxylation of orotidine 5'-monophosphate (OMP) to uridine 5'-monophosphate (UMP). This Caulobacter sp. (strain K31) protein is Orotidine 5'-phosphate decarboxylase.